The chain runs to 129 residues: Large ribosomal subunit protein bL17 (129 aa).

Belongs to the bacterial ribosomal protein bL17 family. Part of the 50S ribosomal subunit. Contacts protein L32.

This Hahella chejuensis (strain KCTC 2396) protein is Large ribosomal subunit protein bL17.